The sequence spans 1054 residues: MEEVDRLVTASITSIVSALGGCDLASEDASYVLGEEALACLKDVKQWLRAFDEKLGRSDVAKCIASTTLVVSDIPSILSTWNTQSEAGQASKKMDRVALACLEILVPLLWPIEINDETPDNVVASADLLRQAQIRYKRALLGHPSKSILKAVVRLCIPSVAKSKADRDQRDIGIMKLVVFFIRNMLAIDPMEANGKTDDINRSAILEAFENQGVLDLMLTLGSCTGYDIVGVDLPLLDSLYQMVKGLDVVEIFETSPNEPDNQLKNLLDTERRNKPVGSSRHSRFASTMTVLHNGSKISVTGPTASIEKSLEKFDKSKQPGRRLTKPTTGVWEVPVFVGHSAKRYIRVFSELFNDSAFNPLMQTVRKALEQEDDIGPAFKHYLVVLKWFLGVEMHRKTPDFGLIASVVNQEAFIIIMRSIRQGVQAKNWTMVKTAMDSFKTTLVVVNLMSDEEVASNIKARLFYEEEYLTMLADLTRRWALPLTFLQSAVDMTHTLIKTLESFTKANTTLYVRRRRLRAQKKADDTGNVEDLESLPGEEHESAIESRERKFNFSSFESRYFHEDTFTTYRMVLSSFQQLDNCYLGWCLKFLDRAFNKRKCRVMLFRLDYLQLFRTMVKELNSSNPWRKPFEHFFKKYMRQMIPMMKERPCLMVEVIFAKIPGTLHYLESGEEKPVRELKERTSKFVYEFTEGDDIPEERKVCILVASLLDEEKKQLVEWFIDELDSLLRARTGDTQVLNPPKATDELNVPKSIDEDDKFRLLMELVGFTLSRIPKSSVGCKTLCSLPGEVSRADIERATGWLKQWYSTPVDFEPFNKIKRVRRDDKERRGAGGDKEGSQDAEEDDELPLFLASDSEDDIENINDEMFAPVPKEKQQKTKQKLKRKGTSKSTREREKQRDYTAKTTIDIPMSYKSADFIGASDDDSDDERDRKFFEKENELREELRKAEPTINLEEKVDKAFKRQYAYVSDGEEEPLSETESHKQYREKVDEDRDDLSHMAERENRQYDFGDEGHDSDNLEIIDDDSKSPVAAEGTTSSQPIRKRRIVDDSDDDE.

Disordered regions lie at residues 522-543, 823-846, 865-953, and 968-1054; these read KADDTGNVEDLESLPGEEHESA, RDDKERRGAGGDKEGSQDAEEDDE, EMFA…TINL, and VSDG…DDDE. The segment covering 823 to 838 has biased composition (basic and acidic residues); it reads RDDKERRGAGGDKEGS. Residues 877 to 887 are compositionally biased toward basic residues; sequence KTKQKLKRKGT. Basic and acidic residues-rich tracts occupy residues 890 to 901, 928 to 953, and 979 to 1017; these read STREREKQRDYT, ERDRKFFEKENELREELRKAEPTINL, and TESHKQYREKVDEDRDDLSHMAERENRQYDFGDEGHDSD.

Belongs to the timeless family. As to quaternary structure, component of the fork protection complex (FPC) consisting of TOF1 and CSM3.

The protein resides in the nucleus. Forms a fork protection complex (FPC) with CSM3 and which is required for chromosome segregation during meiosis and DNA damage repair. FPC coordinates leading and lagging strand synthesis and moves with the replication fork. FPC stabilizes replication forks in a configuration that is recognized by replication checkpoint sensors. The chain is Topoisomerase 1-associated factor 1 (TOF1) from Yarrowia lipolytica (strain CLIB 122 / E 150) (Yeast).